The primary structure comprises 1781 residues: Chitin synthase 7 (1781 aa).

N-linked (GlcNAc...) asparagine glycosylation is found at N133, N534, N629, N644, N655, and N660. 2 helical membrane-spanning segments follow: residues 741–761 and 777–797; these read AWVA…LKFV and LVLF…IIGF. 2 N-linked (GlcNAc...) asparagine glycosylation sites follow: N889 and N1011. A helical membrane pass occupies residues 1048–1068; that stretch reads LLLAFAIIICIVTAVKFLAAL. Residue N1413 is glycosylated (N-linked (GlcNAc...) asparagine). 3 helical membrane passes run 1444-1464, 1471-1491, and 1499-1519; these read LTGT…IYVL, IPYI…LIFI, and IGWM…LPLY. A glycan (N-linked (GlcNAc...) asparagine) is linked at N1526. Residues 1677-1712 are disordered; sequence QANLSPAAGGGHSRSGTALGFSSGSRSPMPDAMRSQ. Polar residues predominate over residues 1690-1702; it reads RSGTALGFSSGSR. The 57-residue stretch at 1723-1779 folds into the DEK-C domain; sequence GPTDMAIVESIRSVLCEVDLDTVTKKQVRALVEQRLQTELVGERRTFMDRQIDHELE.

Belongs to the chitin synthase family. Class V subfamily.

Its subcellular location is the cell membrane. It catalyses the reaction [(1-&gt;4)-N-acetyl-beta-D-glucosaminyl](n) + UDP-N-acetyl-alpha-D-glucosamine = [(1-&gt;4)-N-acetyl-beta-D-glucosaminyl](n+1) + UDP + H(+). Functionally, polymerizes chitin, a structural polymer of the cell wall and septum, by transferring the sugar moiety of UDP-GlcNAc to the non-reducing end of the growing chitin polymer. Shows additive effects in septum formation with CHS1, CHS2, CHS3A, CHS4, CHS5 and CHS6. Indispensable for perithecia formation and regulates conidiation. Plays an important role in the response to cell wall stress. Also required for hyphal growth and pathogenicity. The polypeptide is Chitin synthase 7 (Gibberella zeae (strain ATCC MYA-4620 / CBS 123657 / FGSC 9075 / NRRL 31084 / PH-1) (Wheat head blight fungus)).